A 367-amino-acid chain; its full sequence is Putative F-box protein At3g21120 (367 aa).

Residues 1–43 (MHLPEDLVLEILSKVPAVSLARFRSTCRRWNALVVDGSFAKKH) form the F-box domain.

The chain is Putative F-box protein At3g21120 from Arabidopsis thaliana (Mouse-ear cress).